The sequence spans 1059 residues: Isoleucine--tRNA ligase (1059 aa).

A 'HIGH' region motif is present at residues 47 to 57 (PYTSGQMHLGT). The short motif at 606–610 (KMSKS) is the 'KMSKS' region element. Lys609 contacts ATP.

The protein belongs to the class-I aminoacyl-tRNA synthetase family. IleS type 2 subfamily. In terms of assembly, monomer. The cofactor is Zn(2+).

Its subcellular location is the cytoplasm. The enzyme catalyses tRNA(Ile) + L-isoleucine + ATP = L-isoleucyl-tRNA(Ile) + AMP + diphosphate. Catalyzes the attachment of isoleucine to tRNA(Ile). As IleRS can inadvertently accommodate and process structurally similar amino acids such as valine, to avoid such errors it has two additional distinct tRNA(Ile)-dependent editing activities. One activity is designated as 'pretransfer' editing and involves the hydrolysis of activated Val-AMP. The other activity is designated 'posttransfer' editing and involves deacylation of mischarged Val-tRNA(Ile). The sequence is that of Isoleucine--tRNA ligase from Haloquadratum walsbyi (strain DSM 16790 / HBSQ001).